The primary structure comprises 76 residues: Large ribosomal subunit protein uL30 (76 aa).

This sequence belongs to the universal ribosomal protein uL30 family. As to quaternary structure, part of the 50S ribosomal subunit.

The sequence is that of Large ribosomal subunit protein uL30 from Anaeromyxobacter dehalogenans (strain 2CP-1 / ATCC BAA-258).